The sequence spans 340 residues: Entry-fusion complex protein OPG094 (340 aa).

Residues 1 to 20 form a disordered region; it reads MGGGVSVELPKRDPPPGVPT. Glycine 2 is lipidated: N-myristoyl glycine; by host. The Virion surface segment spans residues 2–319; sequence GGGVSVELPK…VQHNIKHSFD (318 aa). A helical; Signal-anchor for type II membrane protein membrane pass occupies residues 320–340; that stretch reads LKLHLISLLSLLVIWILIVAI.

It belongs to the orthopoxvirus OPG086 family. As to quaternary structure, interacts with OPG143. Component of the entry fusion complex (EFC) composed of OPG053, OPG076, OPG086, OPG094, OPG095, OPG099, OPG107, OPG143, OPG104, OPG147 and OPG155. Except for OPG095 and OPG053, each of the EFC proteins is required for assembly or stability of the complex. Unglycosylated because produced in viral factories instead of the classic ER -Golgi route.

Its subcellular location is the virion membrane. Its function is as follows. Component of the entry fusion complex (EFC), which consists of 11 proteins. During cell infection, this complex mediates entry of the virion core into the host cytoplasm by a two-step mechanism consisting of lipid mixing of the viral and cellular membranes and subsequent pore formation. The chain is Entry-fusion complex protein OPG094 (OPG094) from Homo sapiens (Human).